Consider the following 430-residue polypeptide: Tyrosine--tRNA ligase (430 aa).

Residue Tyr-32 coordinates L-tyrosine. The short motif at 37–46 (PTADSLHIGH) is the 'HIGH' region element. Residues Tyr-172 and Gln-176 each coordinate L-tyrosine. Residues 232-236 (KFGKT) carry the 'KMSKS' region motif. Lys-235 lines the ATP pocket. Residues 362-429 (IKAVDLCTEK…GKKNYYLLIA (68 aa)) enclose the S4 RNA-binding domain.

Belongs to the class-I aminoacyl-tRNA synthetase family. TyrS type 1 subfamily. Homodimer.

It is found in the cytoplasm. It catalyses the reaction tRNA(Tyr) + L-tyrosine + ATP = L-tyrosyl-tRNA(Tyr) + AMP + diphosphate + H(+). Functionally, catalyzes the attachment of tyrosine to tRNA(Tyr) in a two-step reaction: tyrosine is first activated by ATP to form Tyr-AMP and then transferred to the acceptor end of tRNA(Tyr). The sequence is that of Tyrosine--tRNA ligase from Parabacteroides distasonis (strain ATCC 8503 / DSM 20701 / CIP 104284 / JCM 5825 / NCTC 11152).